The primary structure comprises 270 residues: Purine nucleoside phosphorylase BT_4389 (270 aa).

Positions 79, 124, and 141 each coordinate Zn(2+).

It belongs to the purine nucleoside phosphorylase YfiH/LACC1 family. In terms of assembly, homodimer. Requires Cu(2+) as cofactor. The cofactor is Zn(2+).

The catalysed reaction is adenosine + phosphate = alpha-D-ribose 1-phosphate + adenine. The enzyme catalyses S-methyl-5'-thioadenosine + phosphate = 5-(methylsulfanyl)-alpha-D-ribose 1-phosphate + adenine. It catalyses the reaction inosine + phosphate = alpha-D-ribose 1-phosphate + hypoxanthine. It carries out the reaction adenosine + H2O + H(+) = inosine + NH4(+). Purine nucleoside enzyme that catalyzes the phosphorolysis of adenosine and inosine nucleosides, yielding D-ribose 1-phosphate and the respective free bases, adenine and hypoxanthine. Also catalyzes the phosphorolysis of S-methyl-5'-thioadenosine into adenine and S-methyl-5-thio-alpha-D-ribose 1-phosphate. Also has adenosine deaminase activity. This chain is Purine nucleoside phosphorylase BT_4389, found in Bacteroides thetaiotaomicron (strain ATCC 29148 / DSM 2079 / JCM 5827 / CCUG 10774 / NCTC 10582 / VPI-5482 / E50).